A 465-amino-acid chain; its full sequence is MKTNPLPATPSVWGGSTVELPPTTRDTAGQGLLRRVLRPPISRRDGPGLPRGSGPRRAASTLWLLGLDGTDAPPGALTPNDDTEQALDKILRGTMRGGAALIGSPRHHLTRQVILTDLCQPNADRAGTLLLALRHPADLPHLAHQRAPPGRQTERLGEAWGQLMEATALGSGRAESGCTRAGLVSFNFLVAACAASYDARDAADAVRAHVTANYRGTRVGARLDRFSECLRAMVHTHVFPHEVMRFFGGLVSWVTQDELASVTAVCAGPQEAAHTGHPGRPRSAVILPACAFVDLDAELGLGGPGAAFLYLVFTYRQRRDQELCCVYVIKSQLPPRGLEPALERLFGRLRITNTIHGTEDMTPPAPNRNPDFPLAGLAANPQTPRCSAGQVTNPQFADRLYRWQPDLRGRPTARTCTYAAFAELGMMPEDSPRCLHRTERFGAVSVPVVILEGVVWRPGEWRACA.

The segment at 1-29 (MKTNPLPATPSVWGGSTVELPPTTRDTAG) is disordered.

The protein belongs to the herpesviridae TRX1 protein family. In terms of assembly, interacts with TRX2, MCP and capsid vertex component 2/CVC2.

It is found in the virion. It localises to the host nucleus. In terms of biological role, structural component of the T=16 icosahedral capsid. The capsid is composed of pentamers and hexamers of major capsid protein/MCP, which are linked together by heterotrimers called triplexes. These triplexes are formed by a single molecule of triplex protein 1/TRX1 and two copies of triplex protein 2/TRX2. Additionally, TRX1 is required for efficient transport of TRX2 to the nucleus, which is the site of capsid assembly. This is Triplex capsid protein 1 from Homo sapiens (Human).